Reading from the N-terminus, the 376-residue chain is Alanine racemase 1 (376 aa).

The active-site Proton acceptor; specific for D-alanine is the K40. K40 is modified (N6-(pyridoxal phosphate)lysine). R138 contributes to the substrate binding site. Catalysis depends on Y268, which acts as the Proton acceptor; specific for L-alanine. M316 contributes to the substrate binding site.

This sequence belongs to the alanine racemase family. Pyridoxal 5'-phosphate serves as cofactor.

The catalysed reaction is L-alanine = D-alanine. It participates in amino-acid biosynthesis; D-alanine biosynthesis; D-alanine from L-alanine: step 1/1. Catalyzes the interconversion of L-alanine and D-alanine. May also act on other amino acids. The sequence is that of Alanine racemase 1 (alr1) from Oceanobacillus iheyensis (strain DSM 14371 / CIP 107618 / JCM 11309 / KCTC 3954 / HTE831).